The chain runs to 880 residues: DNA mismatch repair protein MutS (880 aa).

631 to 638 (GPNMAGKS) is a binding site for ATP. The tract at residues 835–860 (RAAPPPPAPAAPKTSPVEERLREIQP) is disordered. A compositionally biased stretch (basic and acidic residues) spans 850–860 (PVEERLREIQP).

The protein belongs to the DNA mismatch repair MutS family.

This protein is involved in the repair of mismatches in DNA. It is possible that it carries out the mismatch recognition step. This protein has a weak ATPase activity. The sequence is that of DNA mismatch repair protein MutS from Cereibacter sphaeroides (strain ATCC 17029 / ATH 2.4.9) (Rhodobacter sphaeroides).